The primary structure comprises 80 residues: Clavanin-C (80 aa).

Positions 1-19 are cleaved as a signal peptide; sequence MKTTILILLILGLGINAKS. Positions 20-29 are excised as a propeptide; it reads LEERKSEEEK. At Phe52 the chain carries Phenylalanine amide. A propeptide spanning residues 54-80 is cleaved from the precursor; the sequence is DDQQDNGKFYGHYAEDNGKHWYDTGDQ.

As to expression, hemocytes and pharyngeal tissues.

It localises to the secreted. Functionally, has antimicrobial activity against E.coli, L.monocytogenes and C.albicans. This chain is Clavanin-C, found in Styela clava (Sea squirt).